Consider the following 537-residue polypeptide: GTPase LSG1-1 (537 aa).

One can recognise a CP-type G domain in the interval 158 to 362 (WRQLWRVLER…LCDCPGLVFP (205 aa)). Positions 176 to 180 (DARDP) match the DARXP motif motif. The segment at 206–209 (NKAD) is G4. 206–209 (NKAD) serves as a coordination point for GTP. Positions 234–236 (SAK) are G5. Residues 311-318 (GYPNVGKS) are G1. 314–319 (NVGKSS) provides a ligand contact to GTP. The G2 stretch occupies residues 337 to 341 (GKTKH). Residues 355-358 (DCPG) form a G3 region. G358 provides a ligand contact to GTP. The tract at residues 484 to 508 (LGAETREGSQTEKKGEEAPSLGLDQ) is disordered. Residues 487–500 (ETREGSQTEKKGEE) show a composition bias toward basic and acidic residues.

The protein belongs to the TRAFAC class YlqF/YawG GTPase family. In terms of tissue distribution, ubiquitous, with the highest expression in stem and hypsophyll on day 66.

It localises to the cytoplasm. Functionally, GTPase that might be redundant with LSG1-2 for ribosome biogenesis. Binds to 23S rRNA. The protein is GTPase LSG1-1 of Arabidopsis thaliana (Mouse-ear cress).